Here is a 132-residue protein sequence, read N- to C-terminus: Small ribosomal subunit protein uS8c (132 aa).

This sequence belongs to the universal ribosomal protein uS8 family. As to quaternary structure, part of the 30S ribosomal subunit.

It is found in the plastid. Its subcellular location is the chloroplast. In terms of biological role, one of the primary rRNA binding proteins, it binds directly to 16S rRNA central domain where it helps coordinate assembly of the platform of the 30S subunit. The sequence is that of Small ribosomal subunit protein uS8c (rps8) from Physcomitrium patens (Spreading-leaved earth moss).